The following is a 116-amino-acid chain: U11-theraphotoxin-Hhn1c (116 aa).

A signal peptide spans 1–21 (MNTVRVTFLLVFVLAVSLGQA). The propeptide occupies 22 to 74 (DKDENRMEMQEKTEQGKSYLDFAENLLLQKLEELEAKLLEEDSEESRNSRQKR). The segment at 61–83 (EEDSEESRNSRQKRCIGEGVPCD) is disordered. Disulfide bonds link cysteine 75–cysteine 90, cysteine 82–cysteine 95, and cysteine 89–cysteine 110.

The protein belongs to the neurotoxin 14 (magi-1) family. 01 (HNTX-16) subfamily. In terms of tissue distribution, expressed by the venom gland.

The protein localises to the secreted. Functionally, probable ion channel inhibitor. The chain is U11-theraphotoxin-Hhn1c from Cyriopagopus hainanus (Chinese bird spider).